The sequence spans 231 residues: Probable septum site-determining protein MinC (231 aa).

The segment at 102-125 (KEKAPRPAPAPQAPAQNTTPVTKT) is disordered.

This sequence belongs to the MinC family. As to quaternary structure, interacts with MinD and FtsZ.

Cell division inhibitor that blocks the formation of polar Z ring septums. Rapidly oscillates between the poles of the cell to destabilize FtsZ filaments that have formed before they mature into polar Z rings. Prevents FtsZ polymerization. The chain is Probable septum site-determining protein MinC from Escherichia coli O6:K15:H31 (strain 536 / UPEC).